The primary structure comprises 247 residues: Probable 2-phosphosulfolactate phosphatase (247 aa).

It belongs to the ComB family. Mg(2+) is required as a cofactor.

It catalyses the reaction (2R)-O-phospho-3-sulfolactate + H2O = (2R)-3-sulfolactate + phosphate. This is Probable 2-phosphosulfolactate phosphatase from Clostridium perfringens (strain SM101 / Type A).